The sequence spans 430 residues: Transcription factor PIF4 (430 aa).

5 disordered regions span residues 42 to 71, 97 to 136, 160 to 183, 223 to 266, and 405 to 430; these read QTHR…DQET, MDPL…VMPP, TVGP…SHDR, DRKR…NLSE, and SSPA…RLDH. The span at 43–60 shows a compositional bias: basic and acidic residues; it reads THREQTQTQKQDHHEEAL. Positions 61-71 are enriched in polar residues; the sequence is RSSTFLEDQET. Positions 126-136 are enriched in pro residues; it reads CPDPPPQVMPP. Over residues 160–175 the composition is skewed to polar residues; sequence TVGPSHCGSNPSQNDL. A compositionally biased stretch (low complexity) spans 244–253; sequence NKSNQRSGSN. Over residues 257-266 the composition is skewed to basic and acidic residues; it reads RAAEVHNLSE. In terms of domain architecture, bHLH spans 257 to 306; it reads RAAEVHNLSERRRRDRINERMKALQELIPHCSKTDKASILDEAIDYLKSL. A compositionally biased stretch (low complexity) spans 405-419; it reads SSPAGQQSQQPSSVP.

Belongs to the bHLH protein family. Interacts preferentially with the Pfr form of phytochrome B (phyB). Binds DNA as a homodimer, but once bound to DNA, loses its capacity to interact with phyB. Interacts with APRR1/TOC1 and PIF3. Binds to RGL2 and RGA. Forms non-functional heterodimer with HFR1. Interacts with PHYB, CRY1 and CRY2 in the nucleus in response to low blue light (LBL). Interacts with FYPP1 and FYPP3. Associates to PTAC12/HMR/PAP5, which acts as a transcriptional coactivator to trigger the thermoresponsive growth-relevant genes and promote warm-temperature-dependent PIF4 accumulation. Interacts with MED14. As to expression, mainly expressed in leaves, stems and seedlings, and, to a lower extent, in fruits, flowers and roots.

It is found in the nucleus. Functionally, transcription factor acting negatively in the phytochrome B signaling pathway. May regulate the expression of a subset of genes involved in cell expansion by binding to the G-box motif. Activated by CRY1 and CRY2 in response to low blue light (LBL) by direct binding at chromatin on E-box variant 5'-CA[CT]GTG-3' to stimulate specific gene expression to adapt global physiology (e.g. hypocotyl elongation in low blue light). Element of a PIF4/HMR/MED14-dependent thermoresponsive process; collaboratively with its transcriptional coactivator PTAC12/HMR/PAP5, involved in the regulation of thermoresponsive growth-relevant genes (e.g. mainly involved in biosynthesis and signaling of the phytohormone auxin) leading to daytime warm temperature elicitation of MED14-dependent thermomorphogenesis (e.g. hypocotyl elongation). This Arabidopsis thaliana (Mouse-ear cress) protein is Transcription factor PIF4.